Here is a 316-residue protein sequence, read N- to C-terminus: MSKTDFSHDLLRFSDEVKEALHSGKPVVALESTVIAHGLPYPENVATARKIEAAVRAEGAIPATIGIENGRFLIGMSDADLERFGSTRGIPKASSRDIPVILAQGGMGATTVASSLVAADLAGIPFFASAGIGGVHRGAERSMDISADLIQFTRSRVAVVCAGAKSILDLGLTLEYLETQCVPIISYQSDDFPAFYCRSSGFHSPHRLDDATVIARSIDMHWKLGNQSSVLITHPIHEEDAIGTDEVESIIREAAVQAEHEGIRGPGATPYLMRAVAKATEGKTVKANMSVLISTAALAGKLACAHIDYLRQQNQA.

The active-site Proton donor is the E31. 2 residues coordinate substrate: K92 and V112. Position 144 (D144) interacts with Mn(2+). 146–148 (SAD) is a binding site for substrate. The active-site Nucleophile is the K165.

It belongs to the pseudouridine-5'-phosphate glycosidase family. In terms of assembly, homotrimer. It depends on Mn(2+) as a cofactor.

It catalyses the reaction D-ribose 5-phosphate + uracil = psi-UMP + H2O. Functionally, catalyzes the reversible cleavage of pseudouridine 5'-phosphate (PsiMP) to ribose 5-phosphate and uracil. Functions biologically in the cleavage direction, as part of a pseudouridine degradation pathway. Part of an operon that could be involved in the biosynthesis of the blue pigment indigoidine, which is implicated in pathogenicity and protection from oxidative stress. The chain is Pseudouridine-5'-phosphate glycosidase from Dickeya dadantii (strain 3937) (Erwinia chrysanthemi (strain 3937)).